We begin with the raw amino-acid sequence, 168 residues long: uncharacterized protein (168 aa).

The chain crosses the membrane as a helical span at residues 36 to 56; sequence LNWWQLIVVVGIAISGIAAIA. Asn-74 is a glycosylation site (N-linked (GlcNAc...) asparagine; by host). A run of 3 helical transmembrane segments spans residues 86 to 106, 115 to 135, and 143 to 163; these read FIIIIVLSCLAVVGGIILAWL, KLLTMGLTTGGILGILYALTI, and MVKLGISWVSLLAFVLLGFFI. N-linked (GlcNAc...) asparagine; by host glycosylation is present at Asn-164.

It localises to the membrane. This is an uncharacterized protein from Acanthamoeba polyphaga mimivirus (APMV).